Consider the following 410-residue polypeptide: Testis-specific Y-encoded-like protein 6 (410 aa).

2 disordered regions span residues 1 to 31 (MSLPESPHSPATLDYALEDPHQGQRSREKSK) and 46 to 69 (PIVFPPPRLPEEGVAPQDPADGGH). Position 9 is a phosphoserine (serine 9). Over residues 18–31 (EDPHQGQRSREKSK) the composition is skewed to basic and acidic residues.

It belongs to the nucleosome assembly protein (NAP) family.

This Homo sapiens (Human) protein is Testis-specific Y-encoded-like protein 6 (TSPYL6).